The chain runs to 652 residues: MKKQNNGLIKNPFLWLLFIFFLVTGFQYFYSGNNSGGSQQINYTELVQEITDGNVKELTYQPNGSVIEVSGVYKNPKTSKEETGIQFFTPSVTKVEKFTSTILPADTTVSELQKLATDHKAEVTVKHESSSGIWINLLVSIVPFGILFFFLFSMMGNMGGGNGRNPMSFGRSKAKAANKEDIKVRFSDVAGAEEEKQELVEVVEFLKDPKRFTKLGARIPAGVLLEGPPGTGKTLLAKAVAGEAGVPFFSISGSDFVEMFVGVGASRVRSLFEDAKKAAPAIIFIDEIDAVGRQRGVGLGGGNDEREQTLNQLLIEMDGFEGNEGIIVIAATNRSDVLDPALLRPGRFDRKVLVGRPDVKGREAILKVHAKNKPLAEDVDLKLVAQQTPGFVGADLENVLNEAALVAARRNKSIIDASDIDEAEDRVIAGPSKKDKTVSQKERELVAYHEAGHTIVGLVLSNARVVHKVTIVPRGRAGGYMIALPKEDQMLLSKEDMKEQLAGLMGGRVAEEIIFNVQTTGASNDFEQATQMARAMVTEYGMSEKLGPVQYEGNHAMLGAQSPQKSISEQTAYEIDEEVRSLLNEARNKAAEIIQSNRETHKLIAEALLKYETLDSTQIKALYETGKMPEAVEEESHALSYDEVKSKMNDEK.

Topologically, residues 1–11 are cytoplasmic; sequence MKKQNNGLIKN. The helical transmembrane segment at 12–32 threads the bilayer; that stretch reads PFLWLLFIFFLVTGFQYFYSG. The Extracellular segment spans residues 33-131; that stretch reads NNSGGSQQIN…EVTVKHESSS (99 aa). Residues 132–152 form a helical membrane-spanning segment; it reads GIWINLLVSIVPFGILFFFLF. At 153–652 the chain is on the cytoplasmic side; that stretch reads SMMGNMGGGN…EVKSKMNDEK (500 aa). 227–234 lines the ATP pocket; the sequence is GPPGTGKT. H449 lines the Zn(2+) pocket. Residue E450 is part of the active site. Residues H453 and D525 each coordinate Zn(2+). Positions 628–652 are disordered; sequence MPEAVEEESHALSYDEVKSKMNDEK. Over residues 634-652 the composition is skewed to basic and acidic residues; that stretch reads EESHALSYDEVKSKMNDEK.

This sequence in the central section; belongs to the AAA ATPase family. In the C-terminal section; belongs to the peptidase M41 family. Homohexamer. It depends on Zn(2+) as a cofactor.

Its subcellular location is the cell membrane. In terms of biological role, acts as a processive, ATP-dependent zinc metallopeptidase for both cytoplasmic and membrane proteins. Plays a role in the quality control of integral membrane proteins. The chain is ATP-dependent zinc metalloprotease FtsH from Streptococcus pneumoniae serotype 4 (strain ATCC BAA-334 / TIGR4).